Reading from the N-terminus, the 1598-residue chain is Pentafunctional AROM polypeptide (1598 aa).

The tract at residues 1–384 (MGVPTKISIL…YEPRACTVSN (384 aa)) is 3-dehydroquinate synthase. Residues 44–46 (DTN), 81–84 (ESSK), 114–116 (GGV), and Asp119 contribute to the NAD(+) site. Arg130 serves as a coordination point for 7-phospho-2-dehydro-3-deoxy-D-arabino-heptonate. Residue 139 to 140 (TT) coordinates NAD(+). 2 residues coordinate 7-phospho-2-dehydro-3-deoxy-D-arabino-heptonate: Asp146 and Lys152. Lys161 is a binding site for NAD(+). Asn162 lines the 7-phospho-2-dehydro-3-deoxy-D-arabino-heptonate pocket. NAD(+) contacts are provided by residues 179 to 182 (FLNT) and Asn190. Residue Glu194 coordinates Zn(2+). Residues 194-197 (EVIK) and Lys250 each bind 7-phospho-2-dehydro-3-deoxy-D-arabino-heptonate. Residue Glu260 is the Proton acceptor; for 3-dehydroquinate synthase activity of the active site. Residues 264-268 (RNLLN) and His271 contribute to the 7-phospho-2-dehydro-3-deoxy-D-arabino-heptonate site. Position 271 (His271) interacts with Zn(2+). His275 acts as the Proton acceptor; for 3-dehydroquinate synthase activity in catalysis. Positions 287 and 356 each coordinate 7-phospho-2-dehydro-3-deoxy-D-arabino-heptonate. Residue His287 coordinates Zn(2+). The segment at 397-842 (VYPGFPKSLN…WDTLAQTFKV (446 aa)) is EPSP synthase. Cys824 serves as the catalytic For EPSP synthase activity. The shikimate kinase stretch occupies residues 867–1059 (AASIFIIGMR…RRKENTFFVS (193 aa)). ATP is bound at residue 874–881 (GMRGAGKT). The segment at 1060–1280 (LTFPDLTPAS…AAPGQLSARE (221 aa)) is 3-dehydroquinase. The Proton acceptor; for 3-dehydroquinate dehydratase activity role is filled by His1183. The Schiff-base intermediate with substrate; for 3-dehydroquinate dehydratase activity role is filled by Lys1211. Residues 1293-1598 (AKKFAVIGKP…GVSSSDDIIS (306 aa)) form a shikimate dehydrogenase region.

In the N-terminal section; belongs to the sugar phosphate cyclases superfamily. Dehydroquinate synthase family. This sequence in the 2nd section; belongs to the EPSP synthase family. It in the 3rd section; belongs to the shikimate kinase family. The protein in the 4th section; belongs to the type-I 3-dehydroquinase family. In the C-terminal section; belongs to the shikimate dehydrogenase family. As to quaternary structure, homodimer. It depends on Zn(2+) as a cofactor.

It localises to the cytoplasm. It catalyses the reaction 7-phospho-2-dehydro-3-deoxy-D-arabino-heptonate = 3-dehydroquinate + phosphate. It carries out the reaction 3-dehydroquinate = 3-dehydroshikimate + H2O. The catalysed reaction is shikimate + NADP(+) = 3-dehydroshikimate + NADPH + H(+). The enzyme catalyses shikimate + ATP = 3-phosphoshikimate + ADP + H(+). It catalyses the reaction 3-phosphoshikimate + phosphoenolpyruvate = 5-O-(1-carboxyvinyl)-3-phosphoshikimate + phosphate. The protein operates within metabolic intermediate biosynthesis; chorismate biosynthesis; chorismate from D-erythrose 4-phosphate and phosphoenolpyruvate: step 2/7. It participates in metabolic intermediate biosynthesis; chorismate biosynthesis; chorismate from D-erythrose 4-phosphate and phosphoenolpyruvate: step 3/7. It functions in the pathway metabolic intermediate biosynthesis; chorismate biosynthesis; chorismate from D-erythrose 4-phosphate and phosphoenolpyruvate: step 4/7. Its pathway is metabolic intermediate biosynthesis; chorismate biosynthesis; chorismate from D-erythrose 4-phosphate and phosphoenolpyruvate: step 5/7. The protein operates within metabolic intermediate biosynthesis; chorismate biosynthesis; chorismate from D-erythrose 4-phosphate and phosphoenolpyruvate: step 6/7. In terms of biological role, the AROM polypeptide catalyzes 5 consecutive enzymatic reactions in prechorismate polyaromatic amino acid biosynthesis. The polypeptide is Pentafunctional AROM polypeptide (Paracoccidioides lutzii (strain ATCC MYA-826 / Pb01) (Paracoccidioides brasiliensis)).